The chain runs to 488 residues: Multidrug resistance outer membrane protein MdtP (488 aa).

The first 23 residues, 1–23, serve as a signal peptide directing secretion; it reads MINRQLSRLLLCSILGSTTLISG. The N-palmitoyl cysteine moiety is linked to residue C24. C24 carries S-diacylglycerol cysteine lipidation.

This sequence belongs to the outer membrane factor (OMF) (TC 1.B.17) family. As to quaternary structure, could be part of a tripartite efflux system composed of MdtN, MdtO and MdtP.

The protein localises to the cell outer membrane. In terms of biological role, could be involved in resistance to puromycin, acriflavine and tetraphenylarsonium chloride. This chain is Multidrug resistance outer membrane protein MdtP (mdtP), found in Shigella flexneri.